A 190-amino-acid chain; its full sequence is Peptidyl-tRNA hydrolase (190 aa).

TRNA is bound at residue F14. H19 serves as the catalytic Proton acceptor. The tRNA site is built by M64, N66, and N112.

It belongs to the PTH family. Monomer.

It localises to the cytoplasm. It catalyses the reaction an N-acyl-L-alpha-aminoacyl-tRNA + H2O = an N-acyl-L-amino acid + a tRNA + H(+). In terms of biological role, hydrolyzes ribosome-free peptidyl-tRNAs (with 1 or more amino acids incorporated), which drop off the ribosome during protein synthesis, or as a result of ribosome stalling. Catalyzes the release of premature peptidyl moieties from peptidyl-tRNA molecules trapped in stalled 50S ribosomal subunits, and thus maintains levels of free tRNAs and 50S ribosomes. This is Peptidyl-tRNA hydrolase from Staphylococcus aureus (strain bovine RF122 / ET3-1).